Reading from the N-terminus, the 748-residue chain is Transcription factor FBD3 (748 aa).

Over residues 1–10 (MPEQPRRPSD) the composition is skewed to basic and acidic residues. The segment at 1 to 26 (MPEQPRRPSDQEQNQSETGPPTNKRR) is disordered. Residues 11-21 (QEQNQSETGPP) show a composition bias toward polar residues. Positions 32–59 (CNACRSRKSRCDGQRPSCSSCLSLGFDC) form a DNA-binding region, zn(2)-C6 fungal-type. 2 disordered regions span residues 116–160 (GTIN…EGIP) and 417–438 (IPDE…TSGN). Residues 131 to 141 (APTKASAPSGA) are compositionally biased toward low complexity. The segment covering 429–438 (SGRSPATSGN) has biased composition (polar residues).

It is found in the nucleus. Its function is as follows. Transcription factor; part of the Fusarium detoxification of benzoxazolinone cluster 2 (FDB2) involved in the degradation of benzoxazolinones produced by the host plant. Maize, wheat, and rye produce the 2 benzoxazinone phytoanticipins 2,4-dihy-droxy-7-methoxy-1,4-benzoxazin-3-one (DIMBOA) and 2,4-dihydroxy-1,4-benzoxazin-3-one (DIBOA) that, due to their inherent instability once released, spontaneously degrade to the more stable corresponding benzoxazolinones, 6-methoxy-2-benzoxazolinone (MBOA) and 2-benzoxazolinone (BOA), respectively. FDB3 is not essentiel, but contributes to efficient BOA biotransformation. This Gibberella moniliformis (strain M3125 / FGSC 7600) (Maize ear and stalk rot fungus) protein is Transcription factor FBD3.